Reading from the N-terminus, the 347-residue chain is Microtubule-associated protein Jupiter (347 aa).

The segment covering Met-1 to Ser-14 has biased composition (polar residues). The tract at residues Met-1–Pro-33 is disordered. A Phosphoserine modification is found at Ser-24. A phosphothreonine mark is found at Thr-35 and Thr-96. Phosphoserine is present on residues Ser-105, Ser-134, and Ser-145. 2 disordered regions span residues His-127–Pro-193 and Gly-303–Trp-347. A compositionally biased stretch (low complexity) spans Ser-132–Ser-145. Polar residues predominate over residues Thr-146–Thr-164. The segment covering Pro-181–Pro-193 has biased composition (pro residues).

This sequence belongs to the MAP Jupiter family.

The protein resides in the nucleus. It localises to the cytoplasm. It is found in the cytoskeleton. Its subcellular location is the spindle. Functionally, binds to all microtubule populations. This chain is Microtubule-associated protein Jupiter, found in Drosophila yakuba (Fruit fly).